The chain runs to 484 residues: Putative cysteine ligase BshC (484 aa).

The stretch at 372–435 forms a coiled coil; sequence RAFRDRVEGL…AARDEVLARH (64 aa).

This sequence belongs to the BshC family.

The protein is Putative cysteine ligase BshC of Thermus thermophilus (strain ATCC BAA-163 / DSM 7039 / HB27).